The primary structure comprises 770 residues: U3 small nucleolar RNA-associated protein 14 homolog A (770 aa).

Over residues 1–17 (MNANQAAESNLLASNQQ) the composition is skewed to polar residues. The segment at 1–65 (MNANQAAESN…GKDRQKLADR (65 aa)) is disordered. 3 positions are modified to phosphoserine: Ser30, Ser32, and Ser53. Residues 41-68 (ERKHQKLLESISSLNGKDRQKLADRSEA) are a coiled coil. The segment covering 56-65 (GKDRQKLADR) has biased composition (basic and acidic residues). 2 positions are modified to phosphoserine: Ser78 and Ser82. At Thr206 the chain carries Phosphothreonine. 2 coiled-coil regions span residues 217 to 291 (SLEE…DKAR) and 318 to 348 (LEARQAMQEQLARNKELTQKVRAASESEEEG). Disordered regions lie at residues 334–361 (LTQKVRAASESEEEGEGQEEEEEPLVPD), 392–455 (KDLE…SSQE), and 467–505 (LRTENHQSGKQELSSARTAQREEPAREEEEPMLLQRPER). 2 stretches are compositionally biased toward acidic residues: residues 343-358 (ESEEEGEGQEEEEEPL) and 396-410 (DPAEPEAQETSESEE). A phosphoserine mark is found at Ser406 and Ser408. Residues 411-444 (EKAVVEEETLLKEFEERRSLRQKSELNHMAEPVH) show a composition bias toward basic and acidic residues. Lys449 participates in a covalent cross-link: Glycyl lysine isopeptide (Lys-Gly) (interchain with G-Cter in SUMO2). Ser453 bears the Phosphoserine mark. Ser567 bears the Phosphoserine mark. The residue at position 588 (Arg588) is a Citrulline. Residue Lys732 forms a Glycyl lysine isopeptide (Lys-Gly) (interchain with G-Cter in SUMO2) linkage.

It belongs to the UTP14 family. Interacts with DHX37. Post-translationally, citrullinated by PADI4.

Its subcellular location is the nucleus. The protein localises to the nucleolus. May be required for ribosome biogenesis. The sequence is that of U3 small nucleolar RNA-associated protein 14 homolog A (UTP14A) from Bos taurus (Bovine).